Consider the following 81-residue polypeptide: MLSFRADDHDVDLADAWARRLHIGRSELLRDALRRHLAALAADQDVQAYTERPLTDDENALAEIADWGPAEDWADWADAAR.

As to quaternary structure, forms a complex with cognate toxin MazF2.

In terms of biological role, antitoxin component of a type II toxin-antitoxin (TA) system. The protein is Probable antitoxin MazE2 (mazE2) of Mycobacterium tuberculosis (strain ATCC 25618 / H37Rv).